A 472-amino-acid polypeptide reads, in one-letter code: WAS protein family homolog DDB_G0292878 (472 aa).

Residues 279–472 form a disordered region; that stretch reads LPTYDNSNSG…ESDTDSSEWE (194 aa). Positions 282 to 299 are enriched in polar residues; that stretch reads YDNSNSGSAPVNQSSGGD. Positions 300-314 are enriched in low complexity; the sequence is NNVNNNNNNNNSNNS. Over residues 320-356 the composition is skewed to pro residues; that stretch reads PPQPTNAPPPPPPPPQSANAPPPPPPPPVSAPPPFNP. Acidic residues predominate over residues 363–373; the sequence is NDDDDDDDDDN. Over residues 374-383 the composition is skewed to gly residues; it reads GGGGGPGGAI. The WH2 domain maps to 382–401; it reads AIGDLLADIRRGHKNRLKKA. Residues 457 to 472 are compositionally biased toward acidic residues; that stretch reads TDDQDGESDTDSSEWE.

This sequence belongs to the WASH1 family.

Its function is as follows. Acts as a nucleation-promoting factor by activating the Arp2/3 complex to induce actin polymerization. The polypeptide is WAS protein family homolog DDB_G0292878 (Dictyostelium discoideum (Social amoeba)).